The following is a 321-amino-acid chain: Methionyl-tRNA formyltransferase (321 aa).

113 to 116 lines the (6S)-5,6,7,8-tetrahydrofolate pocket; the sequence is SILP.

It belongs to the Fmt family.

The enzyme catalyses L-methionyl-tRNA(fMet) + (6R)-10-formyltetrahydrofolate = N-formyl-L-methionyl-tRNA(fMet) + (6S)-5,6,7,8-tetrahydrofolate + H(+). Its function is as follows. Attaches a formyl group to the free amino group of methionyl-tRNA(fMet). The formyl group appears to play a dual role in the initiator identity of N-formylmethionyl-tRNA by promoting its recognition by IF2 and preventing the misappropriation of this tRNA by the elongation apparatus. This is Methionyl-tRNA formyltransferase from Vibrio atlanticus (strain LGP32) (Vibrio splendidus (strain Mel32)).